The chain runs to 106 residues: Phosphoribosyl-ATP pyrophosphatase (106 aa).

Belongs to the PRA-PH family.

It localises to the cytoplasm. It catalyses the reaction 1-(5-phospho-beta-D-ribosyl)-ATP + H2O = 1-(5-phospho-beta-D-ribosyl)-5'-AMP + diphosphate + H(+). It participates in amino-acid biosynthesis; L-histidine biosynthesis; L-histidine from 5-phospho-alpha-D-ribose 1-diphosphate: step 2/9. This Limosilactobacillus fermentum (strain NBRC 3956 / LMG 18251) (Lactobacillus fermentum) protein is Phosphoribosyl-ATP pyrophosphatase.